Consider the following 264-residue polypeptide: Zinc finger protein CG30 (264 aa).

The segment at 8 to 63 adopts an RING-type zinc-finger fold; that stretch reads CNICFSVAEIKNYFLQPIDRLTIIPVLELDTCKHQLCSMCIRKIRKRKKVPCPLCR.

It is found in the host nucleus. Its function is as follows. Plays a role in the proper expression of late and very late genes. This chain is Zinc finger protein CG30 (CG30), found in Autographa californica nuclear polyhedrosis virus (AcMNPV).